The sequence spans 760 residues: Catecholate siderophore receptor Fiu (760 aa).

The first 31 residues, 1 to 31 (MENNRNFPARQFHSLTFFAGLCIGITPVAQA), serve as a signal peptide directing secretion. Residues 67-175 (PVADTTRTMT…PTGSINMISK (109 aa)) form the TBDR plug domain. In terms of domain architecture, TBDR beta-barrel spans 180–760 (DSGIDASASI…TFLLTANMHF (581 aa)). Residues 743-760 (RYHPGEPRTFLLTANMHF) carry the TonB C-terminal box motif.

This sequence belongs to the TonB-dependent receptor family.

It localises to the cell outer membrane. In terms of biological role, involved in the active transport across the outer membrane of iron complexed with catecholate siderophores such as dihydroxybenzoylserine and dihydroxybenzoate. It derives its energy for transport by interacting with the trans-periplasmic membrane protein TonB. Can also transport catechol-substituted cephalosporins. Receptor for microcins M, H47 and E492. The chain is Catecholate siderophore receptor Fiu (fiu) from Escherichia coli O157:H7.